The following is a 263-amino-acid chain: MDFKEILYNVDNGVATLTLNRPEVSNGFNIPICEEILKAIDIAKKDDTVQILLINANGKVFSVGGDLVEMQRAVDADDVQSLVRIAELVNKISFALKRLPKPVVMSTDGAVAGAAANIAVAADFCIASDKTRFIQAFVNVGLAPDAGGLFLLTRAIGITRATQLAMTGEALNAEKALEYGIVYKVCEPEKLEKITDRVITRLKRGSVNSYKAIKEMVWQSSFAGWQEYEDLELELQKSLAFTNDFKEGVRAYTEKRRPKFTGK.

Belongs to the enoyl-CoA hydratase/isomerase family. In terms of assembly, homotetramer.

The catalysed reaction is (2E)-decenoyl-[ACP] = (3Z)-decenoyl-[ACP]. The protein operates within lipid metabolism; fatty acid biosynthesis. Functionally, catalyzes the isomerization of trans-2-decenoyl-ACP to cis-3-decenoyl-ACP. Required for survival at low pH. This Streptococcus mutans serotype c (strain ATCC 700610 / UA159) protein is Trans-2-decenoyl-[acyl-carrier-protein] isomerase (fabM).